We begin with the raw amino-acid sequence, 296 residues long: Formylmethanofuran--tetrahydromethanopterin formyltransferase (296 aa).

Belongs to the FTR family. Homotetramer composed of two dimers. Dimerization is sufficient for enzyme activity, but tetramerization is required for high thermostability.

The protein resides in the cytoplasm. The catalysed reaction is N-formylmethanofuran + 5,6,7,8-tetrahydromethanopterin + H(+) = N(5)-formyl-5,6,7,8-tetrahydromethanopterin + methanofuran. It participates in one-carbon metabolism; methanogenesis from CO(2); 5,10-methenyl-5,6,7,8-tetrahydromethanopterin from CO(2): step 2/3. Its activity is regulated as follows. Requires high salt concentrations for activity and thermostability; 1.5-1.8 M KH(2)PO(4) stimulates activity while stabilizing the enzyme. Functionally, catalyzes the reversible transfer of a formyl group from formylmethanofuran (formyl-MFR) to tetrahydromethanopterin (H(4)MPT) to produce 5-formyl tetrahydromethanopterin (5-formyl-H(4)MPT) and methanofuran (MFR). Acts via a ternary-complex mechanism. Uses N-furfurylformamide much less efficiently, does not use N-methylformamide or formamide. Protein overexpressed in E.coli has very similar properties to enzyme purified from M.kandleri. This chain is Formylmethanofuran--tetrahydromethanopterin formyltransferase, found in Methanopyrus kandleri (strain AV19 / DSM 6324 / JCM 9639 / NBRC 100938).